We begin with the raw amino-acid sequence, 128 residues long: Putative transmembrane protein 244 (128 aa).

3 helical membrane passes run 17–37 (FLLC…MGCV), 65–85 (VLLV…VPVV), and 93–113 (AISV…EFPL).

It localises to the membrane. The chain is Putative transmembrane protein 244 (TMEM244) from Homo sapiens (Human).